We begin with the raw amino-acid sequence, 99 residues long: Acylphosphatase (99 aa).

The 93-residue stretch at 5 to 97 (VRQIVIRGRV…RPGERFSQLP (93 aa)) folds into the Acylphosphatase-like domain. Catalysis depends on residues arginine 20 and asparagine 38.

Belongs to the acylphosphatase family.

The catalysed reaction is an acyl phosphate + H2O = a carboxylate + phosphate + H(+). The protein is Acylphosphatase (acyP) of Nitrobacter hamburgensis (strain DSM 10229 / NCIMB 13809 / X14).